The primary structure comprises 684 residues: 1,4-alpha-glucan-branching enzyme (684 aa).

(1,4-alpha-D-glucosyl)n is bound by residues Trp88 and Lys123. The active-site Nucleophile is Asp340. The active-site Proton donor is Glu395.

This sequence belongs to the glycosyl hydrolase 13 family. GlgB subfamily.

It localises to the cytoplasm. The catalysed reaction is Transfers a segment of a (1-&gt;4)-alpha-D-glucan chain to a primary hydroxy group in a similar glucan chain.. It participates in glycan biosynthesis; glycogen biosynthesis. In terms of biological role, glycogen-branching enzyme participates in the glycogen biosynthetic process along with glycogenin and glycogen synthase. Generates alpha-1,6-glucosidic branches from alpha-1,4-linked glucose chains, to increase solubility of the glycogen polymer. The sequence is that of 1,4-alpha-glucan-branching enzyme (be1) from Emericella nidulans (strain FGSC A4 / ATCC 38163 / CBS 112.46 / NRRL 194 / M139) (Aspergillus nidulans).